Consider the following 146-residue polypeptide: MDNYKKILVALALDPNSDRPLVEKAKELSANRDAQLYLIHAVEHLSSYGAAYGVAAGVDVEDMLLEEAKKRMNEIASQLNISSDHQIVKVGPAKFLILEQAKNWGVDLIIVGSHGRHGIQLLLGSTSNAVLHGAKCDVLAVRIKGS.

The protein belongs to the universal stress protein A family. In terms of assembly, homodimer.

The protein resides in the cytoplasm. Its function is as follows. Involved in stress response. The polypeptide is Universal stress protein A homolog 2 (uspA2) (Coxiella burnetii (strain RSA 493 / Nine Mile phase I)).